A 290-amino-acid polypeptide reads, in one-letter code: N-acetylmannosamine kinase (290 aa).

ATP contacts are provided by residues 5-12 and 132-139; these read AIDIGGTK and GVGGGVVS. Positions 156, 166, 168, and 173 each coordinate Zn(2+).

Belongs to the ROK (NagC/XylR) family. NanK subfamily. In terms of assembly, homodimer.

It carries out the reaction an N-acyl-D-mannosamine + ATP = an N-acyl-D-mannosamine 6-phosphate + ADP + H(+). Its pathway is amino-sugar metabolism; N-acetylneuraminate degradation; D-fructose 6-phosphate from N-acetylneuraminate: step 2/5. Its function is as follows. Catalyzes the phosphorylation of N-acetylmannosamine (ManNAc) to ManNAc-6-P. The polypeptide is N-acetylmannosamine kinase (Citrobacter koseri (strain ATCC BAA-895 / CDC 4225-83 / SGSC4696)).